A 374-amino-acid polypeptide reads, in one-letter code: tRNA-specific 2-thiouridylase MnmA (374 aa).

ATP-binding positions include 15–22 (GMSGGVDS) and Met-41. The interval 101 to 103 (NPD) is interaction with target base in tRNA. Catalysis depends on Cys-106, which acts as the Nucleophile. Residues Cys-106 and Cys-203 are joined by a disulfide bond. Gly-130 lines the ATP pocket. Residues 153–155 (KDQ) form an interaction with tRNA region. The active-site Cysteine persulfide intermediate is the Cys-203. Residues 311–312 (RY) form an interaction with tRNA region.

Belongs to the MnmA/TRMU family.

Its subcellular location is the cytoplasm. It catalyses the reaction S-sulfanyl-L-cysteinyl-[protein] + uridine(34) in tRNA + AH2 + ATP = 2-thiouridine(34) in tRNA + L-cysteinyl-[protein] + A + AMP + diphosphate + H(+). In terms of biological role, catalyzes the 2-thiolation of uridine at the wobble position (U34) of tRNA, leading to the formation of s(2)U34. This Lysinibacillus sphaericus (strain C3-41) protein is tRNA-specific 2-thiouridylase MnmA.